The primary structure comprises 257 residues: Myosin-8 (257 aa).

Positions 1–257 form a coiled coil; sequence RAALQAEIEE…REVHTKISAE (257 aa). 3 positions are modified to phosphoserine: serine 33, serine 45, and serine 58.

In terms of assembly, muscle myosin is a hexameric protein that consists of 2 heavy chain subunits (MHC), 2 alkali light chain subunits (MLC) and 2 regulatory light chain subunits (MLC-2).

Its subcellular location is the cytoplasm. It is found in the myofibril. In terms of biological role, muscle contraction. This chain is Myosin-8 (Myh8), found in Rattus norvegicus (Rat).